The primary structure comprises 145 residues: 3-dehydroquinate dehydratase (145 aa).

The Proton acceptor role is filled by Tyr23. Residues Asn75, His81, and Asp88 each contribute to the substrate site. Catalysis depends on His101, which acts as the Proton donor. Substrate is bound by residues Leu102 to Ser103 and Arg112.

Belongs to the type-II 3-dehydroquinase family. Homododecamer.

It catalyses the reaction 3-dehydroquinate = 3-dehydroshikimate + H2O. It participates in metabolic intermediate biosynthesis; chorismate biosynthesis; chorismate from D-erythrose 4-phosphate and phosphoenolpyruvate: step 3/7. Functionally, catalyzes a trans-dehydration via an enolate intermediate. This is 3-dehydroquinate dehydratase from Legionella pneumophila (strain Paris).